The sequence spans 780 residues: MLKDIRFSYDRGTSWALDGVSLTVHAGERLCLVGPNGSGKSTLARLIAGLTAPDGGEVTLLGQRVYAAGPNADAYRAARHGIGMVFQNPEDQLVTTVLEDDVAFGPENLGLERELIGERIVDSLQAVGLANLRQSDPTRMSGGQQQRASIAGMLAMNPAMLVLDEPTAMLDESARAEVMRILDDLQARGTTIVHVTHHPDETVHADRIVHMEAGRIIGITAAVDNRSPLAEAVSQSETEGSIGTEAAPSRPTNDSPRQREREDGSELPLLSDGIGDMTNPIIRVSHLTYRYPSAKRAVIDDLSFTIARGETVALMGVNGSGKSTLVRMLCALTAPTAGSIEVAGVPVASTGKRGRNVRPKSANRKQLAQLRRHVGYVMQHPEHQLFADTVAEDVAYGPRNQGLGETEVADRVRESLELLHIGHLADRSPFDLSGGQQRLAAIAGVLACNPDVLIMDEPTASLDAQAKKRIHELLRTLKSRGVTVLIITHDREEAEQIADRVVRMPIAAPASGGPVTATVTEPAVSSNGPAHSVIHRLDPRVKMVGFLAAMFTMFAVNTPTQLALGIAITLAVIAAARLNPLRVLESIHPILILLVLMGVVNLFVVRTGTPVVALGPLSITDQGVTIAVLYACRFALVIILGAVFLTTTTPTAMTDAFATLISPLNRLGIHAQEIALVMSLALRFIPTLTDETRAIVDAQSARGGSIETGSLAQRIKAMSAIIVPIFAGTLRHADNLSLALDARCYEEGIRRTHWRALTIAARDLIFAAAVIIYIAAIIAL.

2 consecutive ABC transporter domains span residues 2-238 and 282-531; these read LKDI…QSET and IRVS…GPAH. 34 to 41 serves as a coordination point for ATP; sequence GPNGSGKS. The tract at residues 230–272 is disordered; the sequence is AEAVSQSETEGSIGTEAAPSRPTNDSPRQREREDGSELPLLSD. ATP is bound at residue 316–323; the sequence is GVNGSGKS. The next 4 membrane-spanning stretches (helical) occupy residues 551 to 573, 586 to 608, 623 to 645, and 759 to 778; these read FTMF…LAVI, SIHP…VRTG, GVTI…AVFL, and IAAR…AAII.

The protein belongs to the ABC transporter superfamily.

The protein resides in the cell membrane. Probably part of an ABC transporter complex. Responsible for energy coupling to the transport system. This chain is Putative ABC transporter ATP-binding protein BL0043, found in Bifidobacterium longum (strain NCC 2705).